Here is a 165-residue protein sequence, read N- to C-terminus: Neuropeptide W (165 aa).

Positions 1–32 (MAWRPGERGAPASRPRLALLLLLLLLPLPSGA) are cleaved as a signal peptide. The propeptide occupies 65–165 (ALRAAAGPLA…GLPCLAPGPF (101 aa)). Residues 106–165 (SQAGIPVRAPRSPRAPEPALEPESLDFSGAGQRLRRDVSRPAVDPAANRLGLPCLAPGPF) form a disordered region. Residues 113 to 127 (RAPRSPRAPEPALEP) show a composition bias toward low complexity. O-linked (Xyl...) (chondroitin sulfate) serine glycosylation is present at Ser133.

Belongs to the neuropeptide B/W family. As to expression, detected in cerebrospinal fluid and urine (at protein level). Detected at high levels in the substantia nigra, fetal kidney and trachea; at lower levels in testis, uterus, ovary and placenta. Not detectable in many regions of the central nervous system. Also detected at high levels in lymphoblastic leukemia and colorectal adenocarcinoma.

It is found in the secreted. Plays a regulatory role in the organization of neuroendocrine signals accessing the anterior pituitary gland. Stimulates water drinking and food intake. May play a role in the hypothalamic response to stress. NPW23 activates GPR7 and GPR8 more efficiently than NPW30. The sequence is that of Neuropeptide W (NPW) from Homo sapiens (Human).